A 154-amino-acid polypeptide reads, in one-letter code: Ribosome maturation factor RimP (154 aa).

This sequence belongs to the RimP family.

The protein localises to the cytoplasm. Required for maturation of 30S ribosomal subunits. The chain is Ribosome maturation factor RimP from Acetivibrio thermocellus (strain ATCC 27405 / DSM 1237 / JCM 9322 / NBRC 103400 / NCIMB 10682 / NRRL B-4536 / VPI 7372) (Clostridium thermocellum).